A 116-amino-acid chain; its full sequence is Large ribosomal subunit protein bL19 (116 aa).

The protein belongs to the bacterial ribosomal protein bL19 family.

This protein is located at the 30S-50S ribosomal subunit interface and may play a role in the structure and function of the aminoacyl-tRNA binding site. The sequence is that of Large ribosomal subunit protein bL19 from Ectopseudomonas mendocina (strain ymp) (Pseudomonas mendocina).